The following is a 404-amino-acid chain: Tryptophan synthase beta chain (404 aa).

The residue at position 98 (K98) is an N6-(pyridoxal phosphate)lysine.

The protein belongs to the TrpB family. As to quaternary structure, tetramer of two alpha and two beta chains. Requires pyridoxal 5'-phosphate as cofactor.

It catalyses the reaction (1S,2R)-1-C-(indol-3-yl)glycerol 3-phosphate + L-serine = D-glyceraldehyde 3-phosphate + L-tryptophan + H2O. The protein operates within amino-acid biosynthesis; L-tryptophan biosynthesis; L-tryptophan from chorismate: step 5/5. Functionally, the beta subunit is responsible for the synthesis of L-tryptophan from indole and L-serine. In Rhodopseudomonas palustris (strain BisB5), this protein is Tryptophan synthase beta chain.